We begin with the raw amino-acid sequence, 173 residues long: Crossover junction endodeoxyribonuclease RuvC (173 aa).

Catalysis depends on residues Asp-8, Glu-67, and Asp-139. Residues Asp-8, Glu-67, and Asp-139 each contribute to the Mg(2+) site.

This sequence belongs to the RuvC family. In terms of assembly, homodimer which binds Holliday junction (HJ) DNA. The HJ becomes 2-fold symmetrical on binding to RuvC with unstacked arms; it has a different conformation from HJ DNA in complex with RuvA. In the full resolvosome a probable DNA-RuvA(4)-RuvB(12)-RuvC(2) complex forms which resolves the HJ. It depends on Mg(2+) as a cofactor.

The protein localises to the cytoplasm. The enzyme catalyses Endonucleolytic cleavage at a junction such as a reciprocal single-stranded crossover between two homologous DNA duplexes (Holliday junction).. The RuvA-RuvB-RuvC complex processes Holliday junction (HJ) DNA during genetic recombination and DNA repair. Endonuclease that resolves HJ intermediates. Cleaves cruciform DNA by making single-stranded nicks across the HJ at symmetrical positions within the homologous arms, yielding a 5'-phosphate and a 3'-hydroxyl group; requires a central core of homology in the junction. The consensus cleavage sequence is 5'-(A/T)TT(C/G)-3'. Cleavage occurs on the 3'-side of the TT dinucleotide at the point of strand exchange. HJ branch migration catalyzed by RuvA-RuvB allows RuvC to scan DNA until it finds its consensus sequence, where it cleaves and resolves the cruciform DNA. The protein is Crossover junction endodeoxyribonuclease RuvC of Shewanella sp. (strain MR-4).